Here is a 73-residue protein sequence, read N- to C-terminus: Cytoplasmic envelopment protein 3 (73 aa).

Residue G2 is the site of N-myristoyl glycine; by host attachment.

Belongs to the herpesviridae cytoplasmic envelopment protein 3 family. Interacts with cytoplasmic envelopment protein 2; this interaction is essential for the proper localization of each protein to the assembly complex and thus for the production of infectious virus. In terms of processing, myristoylation and palmitoylation (probably on one or more of the nearby cysteines at the N-terminus) enable membrane-binding and Golgi apparatus-specific targeting and are essential for efficient packaging. Post-translationally, phosphorylated. Phosphorylation does not seem to be required for recycling to the host Golgi apparatus. Packaging is selective for underphosphorylated forms.

Its subcellular location is the virion tegument. It is found in the virion membrane. It localises to the host cell membrane. The protein localises to the host Golgi apparatus membrane. In terms of biological role, plays an important role in the cytoplasmic envelopment of tegument proteins and capsids during the assembly and egress processes. Also participates in viral entry at the fusion step probably by regulating the core fusion machinery. This chain is Cytoplasmic envelopment protein 3 (U71), found in Homo sapiens (Human).